A 269-amino-acid chain; its full sequence is Chymotrypsin-like elastase family member 2A (269 aa).

The signal sequence occupies residues 1–16 (MIRALLLSTLVAGALS). A propeptide spans 17-28 (CGVPTYPPQLSR) (activation peptide). One can recognise a Peptidase S1 domain in the interval 29-267 (VVGGEDARPN…YNDWISSVIE (239 aa)). A disulfide bridge links C58 with C74. Catalysis depends on charge relay system residues H73 and D121. Cystine bridges form between C155–C222, C186–C202, and C212–C243. S216 (charge relay system) is an active-site residue.

This sequence belongs to the peptidase S1 family. Elastase subfamily. In terms of assembly, interacts with CPA1. Interacts with SERPINA1. Pancreas.

It localises to the secreted. The enzyme catalyses Preferential cleavage: Leu-|-Xaa, Met-|-Xaa and Phe-|-Xaa. Hydrolyzes elastin.. Its function is as follows. Elastase that enhances insulin signaling and might have a physiologic role in cellular glucose metabolism. Circulates in plasma and reduces platelet hyperactivation, triggers both insulin secretion and degradation, and increases insulin sensitivity. The protein is Chymotrypsin-like elastase family member 2A (CELA2A) of Bos taurus (Bovine).